A 151-amino-acid polypeptide reads, in one-letter code: MLP-like protein 328 (151 aa).

It belongs to the MLP family.

This chain is MLP-like protein 328 (MLP328), found in Arabidopsis thaliana (Mouse-ear cress).